Here is a 529-residue protein sequence, read N- to C-terminus: Peptide chain release factor 3 (529 aa).

The 269-residue stretch at 10 to 278 folds into the tr-type G domain; it reads ARRRTFAIIS…NFVDLAPAPR (269 aa). GTP is bound by residues 19 to 26, 87 to 91, and 141 to 144; these read SHPDAGKT, DTPGH, and NKLD.

Belongs to the TRAFAC class translation factor GTPase superfamily. Classic translation factor GTPase family. PrfC subfamily.

It localises to the cytoplasm. Its function is as follows. Increases the formation of ribosomal termination complexes and stimulates activities of RF-1 and RF-2. It binds guanine nucleotides and has strong preference for UGA stop codons. It may interact directly with the ribosome. The stimulation of RF-1 and RF-2 is significantly reduced by GTP and GDP, but not by GMP. The sequence is that of Peptide chain release factor 3 from Nitratidesulfovibrio vulgaris (strain ATCC 29579 / DSM 644 / CCUG 34227 / NCIMB 8303 / VKM B-1760 / Hildenborough) (Desulfovibrio vulgaris).